The following is a 94-amino-acid chain: Small ribosomal subunit protein bS6 (94 aa).

It belongs to the bacterial ribosomal protein bS6 family.

In terms of biological role, binds together with bS18 to 16S ribosomal RNA. This Akkermansia muciniphila (strain ATCC BAA-835 / DSM 22959 / JCM 33894 / BCRC 81048 / CCUG 64013 / CIP 107961 / Muc) protein is Small ribosomal subunit protein bS6.